We begin with the raw amino-acid sequence, 384 residues long: uncharacterized protein (384 aa).

Over residues 327–339 the composition is skewed to basic residues; that stretch reads KKEKKEKKEKKPK. Positions 327 to 358 are disordered; the sequence is KKEKKEKKEKKPKKAVEEEPKQYLTPEFVNDD.

This is an uncharacterized protein from Magallana gigas (Pacific oyster).